We begin with the raw amino-acid sequence, 106 residues long: UPF0060 membrane protein CHU_3331 (106 aa).

Helical transmembrane passes span 5–25 (FYFI…WLHF), 31–51 (ALLL…LTKI), 59–79 (AYAV…YGIE), and 85–105 (IWDY…LFAP).

It belongs to the UPF0060 family.

It localises to the cell inner membrane. The protein is UPF0060 membrane protein CHU_3331 of Cytophaga hutchinsonii (strain ATCC 33406 / DSM 1761 / CIP 103989 / NBRC 15051 / NCIMB 9469 / D465).